The primary structure comprises 970 residues: MSLPLRHALENVTSVDRILEDLLVRFIINCPNEDLSSVERELFHFEEASWFYTDFIKLMNPTLPSLKIKSFAQLIIKLCPLVWKWDIRVDEALQQFSKYKKSIPVRGAAIFNENLSKILLVQGTESDSWSFPRGKISKDENDIDCCIREVKEEIGFDLTDYIDDNQFIERNIQGKNYKIFLISGVSEVFNFKPQVRNEIDKIEWFDFKKISKTMYKSNIKYYLINSMMRPLSMWLRHQRQIKNEDQLKSYAEEQLKLLLGITKEEQIDPGRELLNMLHTAVQANSNNNAVSNGQVPSSQELQHLKEQSGEHNQQKDQQSSFSSQQQPSIFPSLSEPFANNKNVIPPTMPMANVFMSNPQLFATMNGQPFAPFPFMLPLTNNSNSANPIPTPVPPNFNAPPNPMAFGVPNMHNLSGPAVSQPFSLPPAPLPRDSGYSSSSPGQLLDILNSKKPDSNVQSSKKPKLKILQRGTDLNSIKQNNNDETAHSNSQALLDLLKKPTSSQKIHASKPDTSFLPNDSVSGIQDAEYEDFESSSDEEVETARDERNSLNVDIGVNVMPSEKDSRRSQKEKPRNDASKTNLNASAESNSVEWGPGKSSPSTQSKQNSSVGMQNKYRQEIHIGDSDAYEVFESSSDEEDGKKLEELEQTQDNSKLISQDILKENNFQDGEVPHRDMPTESNKSINETVGLSSTTNTVKKVPKVKILKRGETFASLANDKKAFDSSSNVSSSKDLLQMLRNPISSTVSSNQQSPKSQHLSGDEEIMMMLKRNSVSKPQNSEENASTSSINDANASELLGMLKQKEKDITAPKQPYNVDSYSQKNSAKGLLNILKKNDSTGYPRTEGGPSSEMSTSMKRNDATNNQELDKNSTELLNYLKPKPLNDGYENISNKDSSHELLNILHGNKNSSAFNNNVYATDGYSLASDNNENSSNKLLNMLQNRSSAINEPNFDVRSNGTSGSNELLSILHRK.

In terms of domain architecture, Nudix hydrolase spans 101–228 (KSIPVRGAAI…IKYYLINSMM (128 aa)). Phosphoserine is present on Ser-116. Positions 134-155 (GKISKDENDIDCCIREVKEEIG) match the Nudix box motif. Mn(2+) is bound by residues Glu-149 and Glu-153. Residues 302 to 314 (QHLKEQSGEHNQQ) show a composition bias toward basic and acidic residues. Disordered regions lie at residues 302 to 341 (QHLK…ANNK), 417 to 465 (AVSQ…PKLK), 501 to 520 (SSQK…NDSV), and 528 to 692 (YEDF…LSST). The segment covering 315-334 (KDQQSSFSSQQQPSIFPSLS) has biased composition (low complexity). The residue at position 439 (Ser-439) is a Phosphoserine. Acidic residues predominate over residues 528-539 (YEDFESSSDEEV). Basic and acidic residues predominate over residues 560–576 (SEKDSRRSQKEKPRNDA). The span at 577 to 590 (SKTNLNASAESNSV) shows a compositional bias: polar residues. A compositionally biased stretch (low complexity) spans 596–608 (KSSPSTQSKQNSS). A compositionally biased stretch (acidic residues) spans 625–637 (DAYEVFESSSDEE). At Thr-677 the chain carries Phosphothreonine. The segment covering 677–691 (TESNKSINETVGLSS) has biased composition (polar residues). 6 positions are modified to phosphoserine: Ser-679, Ser-682, Ser-751, Ser-771, Ser-773, and Ser-778. Residues 831 to 867 (LKKNDSTGYPRTEGGPSSEMSTSMKRNDATNNQELDK) form a disordered region. Positions 848–863 (SEMSTSMKRNDATNNQ) are enriched in polar residues.

It belongs to the Nudix hydrolase family. DCP2 subfamily. As to quaternary structure, component of the decapping complex composed of DCP1 and DCP2. Interacts with mRNA, LSM2, LSM4 and LSM8. Interacts with EDC3. Mn(2+) serves as cofactor.

The protein resides in the cytoplasm. It localises to the P-body. The catalysed reaction is a 5'-end (N(7)-methyl 5'-triphosphoguanosine)-ribonucleoside in mRNA + H2O = N(7)-methyl-GDP + a 5'-end phospho-ribonucleoside in mRNA + 2 H(+). Functionally, catalytic component of the decapping complex necessary for the degradation of mRNAs, both in normal mRNA turnover and in nonsense-mediated mRNA decay. Removes the 7-methyl guanine cap structure from mRNA molecules, yielding a 5'-phosphorylated mRNA fragment and 7m-GDP. Decapping is the major pathway of mRNA degradation in yeast and occurs through deadenylation, decapping and subsequent 5' to 3' exonucleolytic decay of the transcript body. Blocks autophagy in nutrient-rich conditions by repressing the expression of ATG-related genes through degradation of their transcripts. The polypeptide is m7GpppN-mRNA hydrolase (Saccharomyces cerevisiae (strain ATCC 204508 / S288c) (Baker's yeast)).